Consider the following 463-residue polypeptide: Succinate--CoA ligase [ADP-forming] subunit beta, mitochondrial (463 aa).

The N-terminal 53 residues, 1-53 (MAASMFYGRQLAAAALRSHRPQTTLRAAAQVLGNSGLFNKHGLQVQQQQQRTL), are a transit peptide targeting the mitochondrion. In terms of domain architecture, ATP-grasp spans 61 to 288 (MELLQEAGVS…SNSAYRQKKI (228 aa)). N6-acetyllysine is present on Lys-78. The residue at position 84 (Tyr-84) is a Phosphotyrosine. N6-acetyllysine; alternate is present on Lys-88. Lys-88 bears the N6-succinyllysine; alternate mark. ATP contacts are provided by residues Lys-98 and 105-107 (GRG). 4 positions are modified to N6-acetyllysine: Lys-129, Lys-139, Lys-143, and Lys-216. Positions 258 and 272 each coordinate Mg(2+). The residue at position 279 (Ser-279) is a Phosphoserine. Substrate is bound at residue Asn-323. Thr-341 carries the post-translational modification Phosphothreonine. Lys-368 is subject to N6-acetyllysine. Residue 380–382 (GIM) participates in substrate binding. Residue Lys-438 is modified to N6-acetyllysine.

Belongs to the succinate/malate CoA ligase beta subunit family. ATP-specific subunit beta subfamily. Heterodimer of an alpha and a beta subunit. The beta subunit determines specificity for ATP. Interacts with ALAS2. Mg(2+) is required as a cofactor.

The protein resides in the mitochondrion. The catalysed reaction is succinate + ATP + CoA = succinyl-CoA + ADP + phosphate. It functions in the pathway carbohydrate metabolism; tricarboxylic acid cycle; succinate from succinyl-CoA (ligase route): step 1/1. Functionally, ATP-specific succinyl-CoA synthetase functions in the citric acid cycle (TCA), coupling the hydrolysis of succinyl-CoA to the synthesis of ATP and thus represents the only step of substrate-level phosphorylation in the TCA. The beta subunit provides nucleotide specificity of the enzyme and binds the substrate succinate, while the binding sites for coenzyme A and phosphate are found in the alpha subunit. This is Succinate--CoA ligase [ADP-forming] subunit beta, mitochondrial from Mus musculus (Mouse).